The chain runs to 116 residues: Small ribosomal subunit protein uS13 (116 aa).

The tract at residues 88 to 116 (GSRHKKGLPVRGQHTKNNARTRKGPRKQA) is disordered.

This sequence belongs to the universal ribosomal protein uS13 family. Part of the 30S ribosomal subunit. Forms a loose heterodimer with protein S19. Forms two bridges to the 50S subunit in the 70S ribosome.

Located at the top of the head of the 30S subunit, it contacts several helices of the 16S rRNA. In the 70S ribosome it contacts the 23S rRNA (bridge B1a) and protein L5 of the 50S subunit (bridge B1b), connecting the 2 subunits; these bridges are implicated in subunit movement. Contacts the tRNAs in the A and P-sites. This chain is Small ribosomal subunit protein uS13, found in Finegoldia magna (strain ATCC 29328 / DSM 20472 / WAL 2508) (Peptostreptococcus magnus).